We begin with the raw amino-acid sequence, 499 residues long: 2-isopropylmalate synthase (499 aa).

The 263-residue stretch at 5-267 (IKIFDTTLRD…ETGINLGEIA (263 aa)) folds into the Pyruvate carboxyltransferase domain. Mn(2+) is bound by residues aspartate 14, histidine 202, histidine 204, and asparagine 238. A regulatory domain region spans residues 391–499 (SVEVLHVISG…YLSALNRIRR (109 aa)).

It belongs to the alpha-IPM synthase/homocitrate synthase family. LeuA type 1 subfamily. Mn(2+) is required as a cofactor.

The protein localises to the cytoplasm. The enzyme catalyses 3-methyl-2-oxobutanoate + acetyl-CoA + H2O = (2S)-2-isopropylmalate + CoA + H(+). The protein operates within amino-acid biosynthesis; L-leucine biosynthesis; L-leucine from 3-methyl-2-oxobutanoate: step 1/4. Its function is as follows. Catalyzes the condensation of the acetyl group of acetyl-CoA with 3-methyl-2-oxobutanoate (2-ketoisovalerate) to form 3-carboxy-3-hydroxy-4-methylpentanoate (2-isopropylmalate). This chain is 2-isopropylmalate synthase, found in Pyrococcus furiosus (strain ATCC 43587 / DSM 3638 / JCM 8422 / Vc1).